The primary structure comprises 232 residues: Small ribosomal subunit protein uS3 (232 aa).

The KH type-2 domain maps to 39 to 107; that stretch reads VRQFLTKELA…PAQINIAEVR (69 aa).

Belongs to the universal ribosomal protein uS3 family. Part of the 30S ribosomal subunit. Forms a tight complex with proteins S10 and S14.

In terms of biological role, binds the lower part of the 30S subunit head. Binds mRNA in the 70S ribosome, positioning it for translation. The chain is Small ribosomal subunit protein uS3 from Yersinia pseudotuberculosis serotype O:1b (strain IP 31758).